A 96-amino-acid polypeptide reads, in one-letter code: C-C motif chemokine 1 (96 aa).

The signal sequence occupies residues 1–23; it reads MQIITTALVCLLLAGMWPEDVDS. Disulfide bonds link cysteine 33/cysteine 57, cysteine 34/cysteine 73, and cysteine 49/cysteine 91. The N-linked (GlcNAc...) asparagine glycan is linked to asparagine 52.

The protein belongs to the intercrine beta (chemokine CC) family. As to quaternary structure, monomer.

It is found in the secreted. Cytokine that is chemotactic for monocytes but not for neutrophils. Binds to CCR8. In Homo sapiens (Human), this protein is C-C motif chemokine 1 (CCL1).